We begin with the raw amino-acid sequence, 473 residues long: FAD-dependent oxidoreductase dpasF (473 aa).

The first 21 residues, 1–21 (MNRLLASALLVGSAVVAPVSA), serve as a signal peptide directing secretion. Residues asparagine 26, asparagine 54, asparagine 92, asparagine 133, asparagine 185, asparagine 276, and asparagine 401 are each glycosylated (N-linked (GlcNAc...) asparagine).

The protein belongs to the beta-cyclopiazonate dehydrogenase family. FAD is required as a cofactor.

It participates in secondary metabolite biosynthesis; terpenoid biosynthesis. In terms of biological role, FAD-dependent oxidoreductase; part of the gene cluster that mediates the biosynthesis of the diterpenoid pyrones subglutinols A and B. The first step of the pathway is the synthesis of the alpha-pyrone moiety by the polyketide synthase dpasA via condensation of one acetyl-CoA starter unit with 3 malonyl-CoA units and 2 methylations. The alpha-pyrone is then combined with geranylgeranyl pyrophosphate (GGPP) formed by the GGPP synthase dpasD through the action of the prenyltransferase dpasC to yield a linear alpha-pyrone diterpenoid. Subsequent steps in the diterpenoid pyrone biosynthetic pathway involve the decalin core formation, which is initiated by the epoxidation of the C10-C11 olefin by the FAD-dependent oxidoreductase dpasE, and is followed by a cyclization cascade catalyzed by the terpene cyclase dpasB. The FAD-linked oxidoreductase dpasF is then involved in tetrahydrofuran (THF) ring formation at the C5 unit to complete the formation of subglutinols A and B. DpasF possesses also an additional catalytic ability of multi-step oxidations to generate a new DDP analog with an enone system at the C5 named FDDP A. This is FAD-dependent oxidoreductase dpasF from Apiospora sacchari (Arthrinium sacchari).